Here is a 553-residue protein sequence, read N- to C-terminus: MSEIALTVSVLALVAVVGLWIGNVKIRGVGFGIGGVLFGGIIVGHFVDQAGVALSSPMLHFIQEFGLILFVYTIGIQVGPGFFASLRVSGLRLNLFAILIVILGGLVTAVLHKLFNIPLPVVLGIFSGAVTNTPALGAGQQILRDLGVPFEVVDQMGMSYAMAYPFGICGILLTMWLVRLFFRINVEKEAQRFEESSGNGHAHLHTINVRVENPNLNQMAIQDVPMLNNDNIVCSRLKRGELLMVPAPGTLIQAGDLLHLVGRPEDLHNAQLVIGQEVATSLSTRGTDLKVERVVVTNEKVLGKKIRDLHVKQRYDVVISRLNRAGVELVASSSASLQFGDILNLVGRPEAIDAVAAELGNAQQKLQQVQMLPVFIGIGLGVLLGSIPLFIPGFPAALKLGLAGGPLIMALILGRIGSIGKLYWFMPPSANLALRELGIVLFLAVVGLKSGGDFVATLTQGDGLSWIAYGIFITAIPLLTVGVLARMLAKMNYLTLCGMLAGSMTDPPALAFANNLHATSGAAALSYATVYPLVMFLRIITPQLLAVLFWGLS.

5 helical membrane-spanning segments follow: residues 4 to 24 (IALT…IGNV), 28 to 48 (GVGF…HFVD), 65 to 85 (FGLI…FFAS), 95 to 115 (LFAI…HKLF), and 158 to 178 (MSYA…MWLV). RCK C-terminal domains lie at 192-276 (RFEE…VIGQ) and 279-361 (ATSL…ELGN). Helical transmembrane passes span 371–391 (MLPV…PLFI), 403–425 (AGGP…LYWF), 437–457 (LGIV…FVAT), 464–484 (LSWI…VGVL), 493–513 (YLTL…LAFA), and 532–552 (PLVM…FWGL).

The protein belongs to the AAE transporter (TC 2.A.81) family. YidE subfamily.

The protein resides in the cell membrane. The protein is Putative transport protein KPN78578_40470 of Klebsiella pneumoniae subsp. pneumoniae (strain ATCC 700721 / MGH 78578).